Reading from the N-terminus, the 232-residue chain is Ribosome maturation protein SDO1 homolog (232 aa).

Belongs to the SDO1/SBDS family.

This is Ribosome maturation protein SDO1 homolog from Methanothermobacter thermautotrophicus (strain ATCC 29096 / DSM 1053 / JCM 10044 / NBRC 100330 / Delta H) (Methanobacterium thermoautotrophicum).